Consider the following 265-residue polypeptide: Mlc titration factor A (265 aa).

Residues His-111, His-148, His-152, and Glu-211 each coordinate Zn(2+).

It belongs to the MtfA family. As to quaternary structure, interacts with Mlc. Zn(2+) is required as a cofactor.

The protein localises to the cytoplasm. In terms of biological role, involved in the modulation of the activity of the glucose-phosphotransferase system (glucose-PTS). Interacts with the transcriptional repressor Mlc, preventing its interaction with DNA and leading to the modulation of expression of genes regulated by Mlc, including ptsG, which encodes the PTS system glucose-specific EIICB component. Shows zinc-dependent metallopeptidase activity. The protein is Mlc titration factor A of Salmonella enteritidis PT4 (strain P125109).